A 291-amino-acid chain; its full sequence is Cytosolic Fe-S cluster assembly factor CFD1 (291 aa).

24–31 serves as a coordination point for ATP; that stretch reads GKGGVGKS. [4Fe-4S] cluster-binding residues include C199 and C202. The interval 270-291 is disordered; that stretch reads ENEEEAKETAEEEKSRAATNGQ. Residues 276–285 show a composition bias toward basic and acidic residues; it reads KETAEEEKSR.

This sequence belongs to the Mrp/NBP35 ATP-binding proteins family. NUBP2/CFD1 subfamily. As to quaternary structure, heterotetramer of 2 NBP35 and 2 CFD1 chains. Requires [4Fe-4S] cluster as cofactor.

It is found in the cytoplasm. Its function is as follows. Component of the cytosolic iron-sulfur (Fe/S) protein assembly (CIA) machinery. Required for maturation of extramitochondrial Fe-S proteins. The NBP35-CFD1 heterotetramer forms a Fe-S scaffold complex, mediating the de novo assembly of an Fe-S cluster and its transfer to target apoproteins. Required for biogenesis and export of both ribosomal subunits, which may reflect a role in assembly of the Fe/S clusters in RLI1, a protein which performs rRNA processing and ribosome export. In Yarrowia lipolytica (strain CLIB 122 / E 150) (Yeast), this protein is Cytosolic Fe-S cluster assembly factor CFD1.